The sequence spans 375 residues: MKWLSRILTVIVTMSMACGALIFNRRHQLKAKTLNFNHKALTIIIPARNEEKRIGHLLHSIIQQQVPVDVIVMNDGSTDETARVARSYGATVVDVVDDTDGKWYGKSHACYQGVTHACTNRIAFVDADVTFLRKDAVETLINQYQLQGEKGLLSVQPYHITKRFYEGFSAIFNLMTVVGMNVFSTLDDGRTNQHAFGPVTLTNKEDYYATGGHKSANRHIIEGFALGSAYTSQSLPVTVYEGFPFVAFRMYQEGFQSLQEGWTKHLSTGAGGTKPKIMTAIVLWLFGSIASILGLCLSLKYRQMSVRKMVALYLSYTTQFIYLHRRVGQFSNLLMVCHPLLFMFFTKIFIQSWKQTHRYGVVEWKGRQYSISKEQ.

4 helical membrane passes run 3 to 23 (WLSR…ALIF), 164 to 184 (FYEG…NVFS), 277 to 297 (IMTA…GLCL), and 330 to 350 (FSNL…KIFI).

The protein belongs to the glycosyltransferase 2 family. CrtQ subfamily.

Its subcellular location is the cell membrane. Its pathway is carotenoid biosynthesis; staphyloxanthin biosynthesis; staphyloxanthin from farnesyl diphosphate: step 4/5. Its function is as follows. Catalyzes the glycosylation of 4,4'-diaponeurosporenoate, i.e. the esterification of glucose at the C1'' position with the carboxyl group of 4,4'-diaponeurosporenic acid, to form glycosyl-4,4'-diaponeurosporenoate. This is a step in the biosynthesis of staphyloxanthin, an orange pigment present in most staphylococci strains. The polypeptide is 4,4'-diaponeurosporenoate glycosyltransferase (crtQ) (Staphylococcus aureus (strain USA300)).